Here is a 362-residue protein sequence, read N- to C-terminus: Probable RNA methyltransferase Tbd_1951 (362 aa).

The Proton acceptor role is filled by glutamate 89. The Radical SAM core domain maps to 92-318; sequence LLPRDGVCVS…AKLRHSAGQD (227 aa). A disulfide bridge links cysteine 99 with cysteine 323. 3 residues coordinate [4Fe-4S] cluster: cysteine 106, cysteine 110, and cysteine 113. S-adenosyl-L-methionine is bound by residues 151 to 152, serine 181, 204 to 206, and asparagine 280; these read GE and SLH. The active-site S-methylcysteine intermediate is cysteine 323. The segment at 342–362 is disordered; it reads LPSAETPAASPKAAASIGFPG. Over residues 343–362 the composition is skewed to low complexity; that stretch reads PSAETPAASPKAAASIGFPG.

It belongs to the radical SAM superfamily. RlmN family. [4Fe-4S] cluster serves as cofactor.

The protein resides in the cytoplasm. In Thiobacillus denitrificans (strain ATCC 25259 / T1), this protein is Probable RNA methyltransferase Tbd_1951.